The sequence spans 358 residues: sn-glycerol-3-phosphate import ATP-binding protein UgpC (358 aa).

The region spanning valine 4 to isoleucine 235 is the ABC transporter domain. Glycine 37–serine 44 serves as a coordination point for ATP.

This sequence belongs to the ABC transporter superfamily. sn-glycerol-3-phosphate importer (TC 3.A.1.1.3) family. In terms of assembly, the complex is composed of two ATP-binding proteins (UgpC), two transmembrane proteins (UgpA and UgpE) and a solute-binding protein (UgpB).

The protein localises to the cell inner membrane. The enzyme catalyses sn-glycerol 3-phosphate(out) + ATP + H2O = sn-glycerol 3-phosphate(in) + ADP + phosphate + H(+). In terms of biological role, part of the ABC transporter complex UgpBAEC involved in sn-glycerol-3-phosphate (G3P) import. Responsible for energy coupling to the transport system. The chain is sn-glycerol-3-phosphate import ATP-binding protein UgpC from Roseobacter denitrificans (strain ATCC 33942 / OCh 114) (Erythrobacter sp. (strain OCh 114)).